The sequence spans 440 residues: Elongation factor 1-alpha (440 aa).

The tr-type G domain maps to 5 to 228; that stretch reads KPHINLVVIG…ALDTYIQPPK (224 aa). Positions 14–21 are G1; the sequence is GHVDHGKS. A GTP-binding site is contributed by 14–21; that stretch reads GHVDHGKS. S21 provides a ligand contact to Mg(2+). Residues 70 to 74 are G2; the sequence is GVTID. The tract at residues 91–94 is G3; the sequence is DAPG. Residues 91–95 and 153–156 each bind GTP; these read DAPGH and NKMD. The interval 153–156 is G4; it reads NKMD. The G5 stretch occupies residues 194 to 196; that stretch reads SAW.

This sequence belongs to the TRAFAC class translation factor GTPase superfamily. Classic translation factor GTPase family. EF-Tu/EF-1A subfamily.

The protein localises to the cytoplasm. The enzyme catalyses GTP + H2O = GDP + phosphate + H(+). GTP hydrolase that promotes the GTP-dependent binding of aminoacyl-tRNA to the A-site of ribosomes during protein biosynthesis. This is Elongation factor 1-alpha from Hyperthermus butylicus (strain DSM 5456 / JCM 9403 / PLM1-5).